Here is a 261-residue protein sequence, read N- to C-terminus: MRIALGIEYDGNGYFGWQRQAEVDSVQGQLERALSIVANEPIGVFCAGRTDAGVHATGQVVHFETNAIRNEGAWTLGVNANLPDNIAVRWVKEVDDSFHARFSATARRYRYVIYNHSFRPGILRHGVSHYHGDIDADRMHQAAQALLGEQDFTSFRAVQCQSKTPFRNVHCVNVTRQGMYVIVDIAANAFLHHMVRNIVGSLLEIGLGNQPLTWMGDLLALKDRNQAAATAKPHGLYLVDVTYPEQYQLPKLALGPLFMLD.

The active-site Nucleophile is Asp51. Tyr109 serves as a coordination point for substrate.

Belongs to the tRNA pseudouridine synthase TruA family. Homodimer.

The enzyme catalyses uridine(38/39/40) in tRNA = pseudouridine(38/39/40) in tRNA. Formation of pseudouridine at positions 38, 39 and 40 in the anticodon stem and loop of transfer RNAs. This is tRNA pseudouridine synthase A from Shewanella baltica (strain OS185).